The primary structure comprises 434 residues: UDP-N-acetylglucosamine 1-carboxyvinyltransferase (434 aa).

Position 22–23 (22–23) interacts with phosphoenolpyruvate; sequence KN. Arginine 99 serves as a coordination point for UDP-N-acetyl-alpha-D-glucosamine. The active-site Proton donor is the cysteine 123. Residue cysteine 123 is modified to 2-(S-cysteinyl)pyruvic acid O-phosphothioketal. Residues 128–132, aspartate 317, and isoleucine 339 each bind UDP-N-acetyl-alpha-D-glucosamine; that span reads RPVDQ.

This sequence belongs to the EPSP synthase family. MurA subfamily.

It localises to the cytoplasm. It catalyses the reaction phosphoenolpyruvate + UDP-N-acetyl-alpha-D-glucosamine = UDP-N-acetyl-3-O-(1-carboxyvinyl)-alpha-D-glucosamine + phosphate. Its pathway is cell wall biogenesis; peptidoglycan biosynthesis. Its function is as follows. Cell wall formation. Adds enolpyruvyl to UDP-N-acetylglucosamine. In Paracidovorax citrulli (strain AAC00-1) (Acidovorax citrulli), this protein is UDP-N-acetylglucosamine 1-carboxyvinyltransferase.